A 158-amino-acid chain; its full sequence is Probable inactive acireductone dioxygenase 2 (158 aa).

The protein belongs to the acireductone dioxygenase (ARD) family.

It is found in the cytoplasm. The protein localises to the nucleus. Probable inactive acireductone dioxygenase. This Caenorhabditis elegans protein is Probable inactive acireductone dioxygenase 2.